A 475-amino-acid chain; its full sequence is Aspartyl/glutamyl-tRNA(Asn/Gln) amidotransferase subunit B (475 aa).

This sequence belongs to the GatB/GatE family. GatB subfamily. As to quaternary structure, heterotrimer of A, B and C subunits.

It carries out the reaction L-glutamyl-tRNA(Gln) + L-glutamine + ATP + H2O = L-glutaminyl-tRNA(Gln) + L-glutamate + ADP + phosphate + H(+). It catalyses the reaction L-aspartyl-tRNA(Asn) + L-glutamine + ATP + H2O = L-asparaginyl-tRNA(Asn) + L-glutamate + ADP + phosphate + 2 H(+). Its function is as follows. Allows the formation of correctly charged Asn-tRNA(Asn) or Gln-tRNA(Gln) through the transamidation of misacylated Asp-tRNA(Asn) or Glu-tRNA(Gln) in organisms which lack either or both of asparaginyl-tRNA or glutaminyl-tRNA synthetases. The reaction takes place in the presence of glutamine and ATP through an activated phospho-Asp-tRNA(Asn) or phospho-Glu-tRNA(Gln). This is Aspartyl/glutamyl-tRNA(Asn/Gln) amidotransferase subunit B from Caldanaerobacter subterraneus subsp. tengcongensis (strain DSM 15242 / JCM 11007 / NBRC 100824 / MB4) (Thermoanaerobacter tengcongensis).